Reading from the N-terminus, the 196-residue chain is Oplophorus-luciferin 2-monooxygenase catalytic subunit (196 aa).

Positions 1–27 are cleaved as a signal peptide; it reads MAYSTLFIIALTAVVTQASSTQKSNLT.

As to quaternary structure, heterotetramer of a catalytic 19 kDa and a non-catalytic 35 kDa subunit.

Its subcellular location is the secreted. The catalysed reaction is coelenterazine + O2 = coelenteramide + hnu + CO2. Its activity is regulated as follows. Inhibited by micromolar Cu(2+). In terms of biological role, catalytic subunit of oplophorus-luciferin 2-monooxygenase. Oxidoreductase that converts coelenterazine (the oplophorus luciferin) to coelenteramide under emission of blue light with a maximum at 454 nm. Is also active with bisdeoxycoelenterazine. The sequence is that of Oplophorus-luciferin 2-monooxygenase catalytic subunit from Oplophorus gracilirostris (Luminous shrimp).